We begin with the raw amino-acid sequence, 396 residues long: Chorismate synthase (396 aa).

Residues Arg-41 and Arg-47 each contribute to the NADP(+) site. Residues 130 to 132, Gly-298, 313 to 317, and Arg-339 contribute to the FMN site; these read RAS and KPIPT.

Belongs to the chorismate synthase family. In terms of assembly, homotetramer. Requires FMNH2 as cofactor.

The enzyme catalyses 5-O-(1-carboxyvinyl)-3-phosphoshikimate = chorismate + phosphate. It functions in the pathway metabolic intermediate biosynthesis; chorismate biosynthesis; chorismate from D-erythrose 4-phosphate and phosphoenolpyruvate: step 7/7. In terms of biological role, catalyzes the anti-1,4-elimination of the C-3 phosphate and the C-6 proR hydrogen from 5-enolpyruvylshikimate-3-phosphate (EPSP) to yield chorismate, which is the branch point compound that serves as the starting substrate for the three terminal pathways of aromatic amino acid biosynthesis. This reaction introduces a second double bond into the aromatic ring system. The sequence is that of Chorismate synthase from Syntrophomonas wolfei subsp. wolfei (strain DSM 2245B / Goettingen).